The chain runs to 89 residues: MKVSVLITLAVLGVMFVWTSAAEQEDHGSDRRDSPALLKNLLGEEVFQSEERACRELLGGCSKDSDCCAHLECRKKWPYHCVWDWTIGK.

Positions Met-1–Ala-22 are cleaved as a signal peptide. Residues Glu-23–Arg-52 constitute a propeptide that is removed on maturation. Intrachain disulfides connect Cys-54-Cys-68, Cys-61-Cys-73, and Cys-67-Cys-81. Ile-87 carries the isoleucine amide modification.

It belongs to the neurotoxin 10 (Hwtx-1) family. 39 (Jztx-34) subfamily. As to expression, expressed by the venom gland.

Its subcellular location is the secreted. Gating-modifier toxin that inhibits voltage-gated sodium channel Nav by shifting the threshold for channel activation to more positive potentials. This toxin moderately inhibits human Nav1.7/SCN9A (IC(50)=459 nM) and weakly inhibits hNav1.2/SCN2A and hNav1.5/SCN5A (&lt;20% inhibition at 1 uM peptide). Inhibition of Nav1.7 is voltage-dependent, with lower inhibition at more positive test pulses. The chain is Mu-theraphotoxin-Phlo1a from Phlogius sp. (Tarantula spider).